The chain runs to 117 residues: Large ribosomal subunit protein bL19 (117 aa).

The protein belongs to the bacterial ribosomal protein bL19 family.

In terms of biological role, this protein is located at the 30S-50S ribosomal subunit interface and may play a role in the structure and function of the aminoacyl-tRNA binding site. This chain is Large ribosomal subunit protein bL19, found in Desulfosudis oleivorans (strain DSM 6200 / JCM 39069 / Hxd3) (Desulfococcus oleovorans).